The primary structure comprises 218 residues: Probable nicotinate-nucleotide adenylyltransferase (218 aa).

Belongs to the NadD family.

The catalysed reaction is nicotinate beta-D-ribonucleotide + ATP + H(+) = deamido-NAD(+) + diphosphate. The protein operates within cofactor biosynthesis; NAD(+) biosynthesis; deamido-NAD(+) from nicotinate D-ribonucleotide: step 1/1. In terms of biological role, catalyzes the reversible adenylation of nicotinate mononucleotide (NaMN) to nicotinic acid adenine dinucleotide (NaAD). The polypeptide is Probable nicotinate-nucleotide adenylyltransferase (Acidithiobacillus ferrooxidans (strain ATCC 23270 / DSM 14882 / CIP 104768 / NCIMB 8455) (Ferrobacillus ferrooxidans (strain ATCC 23270))).